The following is a 246-amino-acid chain: E3 ubiquitin-protein ligase MARCHF2 (246 aa).

An RING-CH-type zinc finger spans residues 56-116; it reads GTQSDGPICR…ELCHTEFAVE (61 aa). Zn(2+) contacts are provided by Cys64, Cys67, Cys80, Cys82, His90, Cys93, Cys106, and Cys109. A run of 2 helical transmembrane segments spans residues 138–158 and 175–195; these read LFCD…SGWL and AVGL…WTLV.

The protein resides in the endoplasmic reticulum membrane. Its subcellular location is the lysosome membrane. It is found in the endosome membrane. The catalysed reaction is S-ubiquitinyl-[E2 ubiquitin-conjugating enzyme]-L-cysteine + [acceptor protein]-L-lysine = [E2 ubiquitin-conjugating enzyme]-L-cysteine + N(6)-ubiquitinyl-[acceptor protein]-L-lysine.. Its pathway is protein modification; protein ubiquitination. In terms of biological role, E3 ubiquitin-protein ligase which may be involved in endosomal trafficking. E3 ubiquitin ligases accept ubiquitin from an E2 ubiquitin-conjugating enzyme in the form of a thioester and then directly transfer the ubiquitin to targeted substrates. This Xenopus laevis (African clawed frog) protein is E3 ubiquitin-protein ligase MARCHF2 (marchf2).